The following is a 2521-amino-acid chain: Piezo-type mechanosensitive ion channel component 1 (2521 aa).

Residues 1-12 (MEPHVLGAVLYW) are Cytoplasmic-facing. A helical membrane pass occupies residues 13 to 25 (LLLPCALLAACLL). Residues 26-28 (RFS) are Extracellular-facing. The helical transmembrane segment at 29–44 (GLSLVYLLFLLLLPWF) threads the bilayer. Residues 45 to 58 (PGPTRCGLQGHTGR) are Cytoplasmic-facing. Residues 59-81 (LLRALLGLSLLFLVAHLALQICL) form a helical membrane-spanning segment. The Extracellular portion of the chain corresponds to 82-121 (HIVPRLDQLLGPSCSRWETLSRHIGVTRLDLKDIPNAIRL). Residues 122–138 (VAPDLGILVVSSVCLGI) form a helical membrane-spanning segment. Residues 139-194 (CGRLARNTRQSPHPRELDDDERDVDASPTAGLQEAATLAPTRRSRLAARFRVTAHW) are Cytoplasmic-facing. Residues 195–214 (LLVAAGRVLAVTLLALAGIA) form a helical membrane-spanning segment. Residues 215-216 (HP) are Extracellular-facing. The chain crosses the membrane as a helical span at residues 217–236 (SALSSVYLLLFLALCTWWAC). The Cytoplasmic portion of the chain corresponds to 237-247 (HFPISTRGFSR). A helical membrane pass occupies residues 248–268 (LCVAVGCFGAGHLICLYCYQM). The Extracellular portion of the chain corresponds to 269 to 309 (PLAQALLPPAGIWARVLGLKDFVGPTNCSSPHALVLNTGLD). N-linked (GlcNAc...) asparagine glycosylation occurs at Asn295. A helical membrane pass occupies residues 310 to 330 (WPVYASPGVLLLLCYATASLR). At 331 to 417 (KLRAYRPSGQ…EASPLHSLGH (87 aa)) the chain is on the cytoplasmic side. Residues 418 to 438 (LIMDQSYVCALIAMMVWSITY) traverse the membrane as a helical segment. Residues 439-440 (HS) lie on the Extracellular side of the membrane. Residues 441 to 456 (WLTFVLLLWACLIWTV) traverse the membrane as a helical segment. Over 457–461 (RSRHQ) the chain is Cytoplasmic. A helical membrane pass occupies residues 462–484 (LAMLCSPCILLYGMTLCCLRYVW). Residues 485 to 512 (AMDLRPELPTTLGPVSLRQLGLEHTRYP) lie on the Extracellular side of the membrane. The helical transmembrane segment at 513–530 (CLDLGAMLLYTLTFWLLL) threads the bilayer. The Cytoplasmic segment spans residues 531-574 (RQFVKEKLLKWAESPAALTEVTVADTEPTRTQTLLQSLGELVKG). The chain crosses the membrane as a helical span at residues 575-595 (VYAKYWIYVCAGMFIVVSFAG). Residue Arg596 is a topological domain, extracellular. Residues 597–617 (LVVYKIVYMFLFLLCLTLFQV) traverse the membrane as a helical segment. Over 618–627 (YYSLWRKLLK) the chain is Cytoplasmic. Residues 628–649 (AFWWLVVAYTMLVLIAVYTFQF) traverse the membrane as a helical segment. The Extracellular portion of the chain corresponds to 650 to 679 (QDFPAYWRNLTGFTDEQLGDLGLEQFSVSE). The helical transmembrane segment at 680-696 (LFSSILVPGFFLLACIL) threads the bilayer. Over 697 to 816 (QLHYFHRPFM…RRLLELHVFK (120 aa)) the chain is Cytoplasmic. At Thr734 the chain carries Phosphothreonine. The segment at 738–769 (REEQQEHQQQQQEEEEEEEDSRDEGLGVATPH) is disordered. The span at 749–759 (QEEEEEEEDSR) shows a compositional bias: acidic residues. The residue at position 758 (Ser758) is a Phosphoserine. A helical membrane pass occupies residues 817-828 (LVALYTVWVALK). Topologically, residues 829–831 (EVS) are extracellular. A helical transmembrane segment spans residues 832 to 845 (VMNLLLVVLWAFAL). The Cytoplasmic segment spans residues 846-859 (PYPRFRPMASCLST). The helical transmembrane segment at 860–874 (VWTCVIIVCKMLYQL) threads the bilayer. The Extracellular segment spans residues 875–926 (KVVNPQEYSSNCTEPFPNSTNLLPTEISQSLLYRGPVDPANWFGVRKGFPNL). The chain crosses the membrane as a helical span at residues 927-954 (GYIQNHLQVLLLLVFEAIVYRRQEHYRR). Residues 955 to 994 (QHQLAPLPAQAVFASGTRQQLDQDLLGCLKYFINFFFYKF) are Cytoplasmic-facing. A helical transmembrane segment spans residues 995-1010 (GLEICFLMAVNVIGQR). At 1011-1012 (MN) the chain is on the extracellular side. The chain crosses the membrane as a helical span at residues 1013 to 1028 (FLVTLHGCWLVAILTR). Over 1029–1041 (RHRQAIARLWPNY) the chain is Cytoplasmic. A helical membrane pass occupies residues 1042–1057 (CLFLALFLLYQYLLCL). Topologically, residues 1058–1096 (GMPPALCIDYPWRWSRAVPMNSALIKWLYLPDFFRAPNS) are extracellular. Residues 1097–1118 (TNLISDFLLLLCASQQWQVFSA) form a helical membrane-spanning segment. Topologically, residues 1119-1153 (ERTEEWQRMAGVNTDRLEPLRGEPNPVPNFIHCRS) are cytoplasmic. Residues 1154 to 1180 (YLDMLKVAVFRYLFWLVLVVVFVTGAT) traverse the membrane as a helical segment. The Extracellular segment spans residues 1181–1185 (RISIF). Residues 1186–1204 (GLGYLLACFYLLLFGTALL) traverse the membrane as a helical segment. The Cytoplasmic segment spans residues 1205–1217 (QRDTRARLVLWDC). The chain crosses the membrane as a helical span at residues 1218 to 1236 (LILYNVTVIISKNMLSLLA). The Extracellular segment spans residues 1237 to 1285 (CVFVEQMQTGFCWVIQLFSLVCTVKGYYDPKEMMDRDQDCLLPVEEAGI). The chain crosses the membrane as a helical span at residues 1286–1302 (IWDSVCFFFLLLQRRVF). The Cytoplasmic portion of the chain corresponds to 1303–1656 (LSHYYLHVRA…ELLLDRRLRI (354 aa)). The stretch at 1339–1368 (HRRIEEKSLAQLKRQMERIRAKQEKHRQGR) forms a coiled coil. 3 disordered regions span residues 1356 to 1402 (RIRA…RRQW), 1462 to 1498 (RQQE…EAAA), and 1576 to 1630 (TLPG…DPGE). Residues 1385 to 1398 (LEPGPDSPGGSSPP) show a composition bias toward low complexity. Ser1391 and Ser1396 each carry phosphoserine. Ser1636 and Ser1646 each carry phosphoserine. Residues 1657 to 1700 (PELEEAELFAEGQGRALRLLRAVYQCVAAHSELLCYFIIILNHM) traverse the membrane as a helical segment. Residues 1701–1704 (VTAS) are Extracellular-facing. A helical membrane pass occupies residues 1705 to 1720 (AGSLVLPVLVFLWAML). The Cytoplasmic segment spans residues 1721 to 1728 (SIPRPSKR). A helical membrane pass occupies residues 1729–1747 (FWMTAIVFTEIAVVVKYLF). The Extracellular portion of the chain corresponds to 1748–1779 (QFGFFPWNSHVVLRRYENKPYFPPRILGLEKT). The chain crosses the membrane as a helical span at residues 1780-1801 (DGYIKYDLVQLMALFFHRSQLL). Residues 1802–1960 (CYGLWDHEED…HTKYRAATDV (159 aa)) lie on the Cytoplasmic side of the membrane. The segment covering 1811-1822 (DSPSKEHDKSGE) has biased composition (basic and acidic residues). Positions 1811–1921 (DSPSKEHDKS…RPSRSGGRVR (111 aa)) are disordered. Residue Thr1854 is modified to Phosphothreonine. Residues 1859–1868 (VELRPRDTRR) are compositionally biased toward basic and acidic residues. Positions 1869–1878 (ISLRFRRRKK) are enriched in basic residues. Over residues 1890-1903 (EAEDREEEEGEEEK) the composition is skewed to acidic residues. A compositionally biased stretch (basic and acidic residues) spans 1904 to 1913 (EAPTGREKRP). The chain crosses the membrane as a helical span at residues 1961 to 1980 (YALMFLADVVDFIIIIFGFW). Over 1981 to 2000 (AFGKHSAATDITSSLSDDQV) the chain is Extracellular. Residues 2001–2017 (PEAFLVMLLIQFSTMVV) traverse the membrane as a helical segment. Over 2018–2031 (DRALYLRKTVLGKL) the chain is Cytoplasmic. The chain crosses the membrane as a helical span at residues 2032–2052 (AFQVALVLAIHLWMFFILPAV). Topologically, residues 2053-2060 (TERMFNQN) are extracellular. The helical transmembrane segment at 2061–2076 (VVAQLWYFVKCIYFAL) threads the bilayer. Residues 2077-2176 (SAYQIRCGYP…KKKIVKYGMG (100 aa)) are Cytoplasmic-facing. A helical transmembrane segment spans residues 2177–2197 (GLIILFLIAIIWFPLLFMSLV). Residues 2198 to 2431 (RSVVGVVNQP…IFSDKVSPPS (234 aa)) lie on the Extracellular side of the membrane. N-linked (GlcNAc...) asparagine glycosylation occurs at Asn2294. A disulfide bond links Cys2411 and Cys2415. A helical membrane pass occupies residues 2432-2452 (LGFLAGYGIMGLYVSIVLVIG). Residues 2453-2521 (KFVRGFFSEI…TMIKWTREKE (69 aa)) lie on the Cytoplasmic side of the membrane.

Belongs to the PIEZO (TC 1.A.75) family. Homotrimer; the homotrimer forms a propeller-shaped Piezo channel with a cation-ion conducting pore. Heterotrimeric interaction may occur between PIEZO1 and PIEZO2. Interacts with PKD2. Interacts with STOML3. Interacts with TMC1, TMC2, PCDH15 and CIB2; the interaction may be part of the MET complex. Interacts with MDFIC (via C-terminus); the interaction prolongs Piezo channel inactivation. Interacts with MDFI (via C-terminus); the interaction prolongs Piezo channel inactivation. In terms of tissue distribution, expressed in numerous tissues. In normal brain, expressed exclusively in neurons, not in astrocytes. In Alzheimer disease brains, expressed in about half of the activated astrocytes located around classical senile plaques. In Parkinson disease substantia nigra, not detected in melanin-containing neurons nor in activated astrocytes. Expressed in erythrocytes (at protein level). Expressed in myoblasts (at protein level).

Its subcellular location is the endoplasmic reticulum membrane. The protein localises to the endoplasmic reticulum-Golgi intermediate compartment membrane. It localises to the cell membrane. It is found in the cell projection. The protein resides in the lamellipodium membrane. It catalyses the reaction K(+)(in) = K(+)(out). It carries out the reaction Na(+)(in) = Na(+)(out). The catalysed reaction is Ca(2+)(in) = Ca(2+)(out). The enzyme catalyses Mg(2+)(in) = Mg(2+)(out). Regulated by auxillary subunits MDFIC and MDFI. Down-regulated by phosphatidylserines exposed on the cell surface. Divalent ions decrease the single-channel permeability of K(+). Pore-forming subunit of the mechanosensitive non-specific cation Piezo channel required for rapidly adapting mechanically activated (MA) currents and has a key role in sensing touch and tactile pain. Piezo channels are homotrimeric three-blade propeller-shaped structures that utilize a cap-motion and plug-and-latch mechanism to gate their ion-conducting pathways. Generates currents characterized by a linear current-voltage relationship that are sensitive to ruthenium red and gadolinium. Conductance to monovalent alkali ions is highest for K(+), intermediate for Na(+) and lowest for Li(+). Divalent ions except for Mn(2+) permeate the channel but more slowly than the monovalent ions and they also reduce K(+) currents. Plays a key role in epithelial cell adhesion by maintaining integrin activation through R-Ras recruitment to the ER, most probably in its activated state, and subsequent stimulation of calpain signaling. In inner ear hair cells, PIEZO1/2 subunits may constitute part of the mechanotransducer (MET) non-selective cation channel complex where they may act as pore-forming ion-conducting component in the complex. In the kidney, may contribute to the detection of intraluminal pressure changes and to urine flow sensing. Acts as a shear-stress sensor that promotes endothelial cell organization and alignment in the direction of blood flow through calpain activation. Plays a key role in blood vessel formation and vascular structure in both development and adult physiology. Acts as a sensor of phosphatidylserine (PS) flipping at the plasma membrane and governs morphogenesis of muscle cells. In myoblasts, flippase-mediated PS enrichment at the inner leaflet of plasma membrane triggers channel activation and Ca2+ influx followed by Rho GTPases signal transduction, leading to assembly of cortical actomyosin fibers and myotube formation. The chain is Piezo-type mechanosensitive ion channel component 1 from Homo sapiens (Human).